The sequence spans 250 residues: Glucosamine-6-phosphate deaminase (250 aa).

The Proton acceptor; for enolization step role is filled by Asp67. The For ring-opening step role is filled by Asn136. His138 acts as the Proton acceptor; for ring-opening step in catalysis. Glu143 functions as the For ring-opening step in the catalytic mechanism.

It belongs to the glucosamine/galactosamine-6-phosphate isomerase family. NagB subfamily.

It carries out the reaction alpha-D-glucosamine 6-phosphate + H2O = beta-D-fructose 6-phosphate + NH4(+). The protein operates within amino-sugar metabolism; N-acetylneuraminate degradation; D-fructose 6-phosphate from N-acetylneuraminate: step 5/5. Functionally, catalyzes the reversible isomerization-deamination of glucosamine 6-phosphate (GlcN6P) to form fructose 6-phosphate (Fru6P) and ammonium ion. This chain is Glucosamine-6-phosphate deaminase, found in Oceanobacillus iheyensis (strain DSM 14371 / CIP 107618 / JCM 11309 / KCTC 3954 / HTE831).